Consider the following 123-residue polypeptide: Kininogen (123 aa).

Bradykinin is released from kininogen by kallikrein. Post-translationally, N-glycosylated. Contains sulfated N-acetylglucosamine and O-acetylated sialic acids as terminal elements on biantennary and triantennary N-glycans.

Functionally, inhibits papain and ficin (cysteine proteinases) but not trypsin (a serine proteinase). This Gadus morhua (Atlantic cod) protein is Kininogen.